Reading from the N-terminus, the 562-residue chain is Beta-hexosaminidase (562 aa).

A signal peptide spans 1–22 (MVLDKMIIFHLLLWLCNVVVHA). 7 N-linked (GlcNAc...) asparagine glycosylation sites follow: N38, N52, N111, N337, N382, N396, and N463.

The protein belongs to the glycosyl hydrolase 20 family.

The enzyme catalyses Hydrolysis of terminal non-reducing N-acetyl-D-hexosamine residues in N-acetyl-beta-D-hexosaminides.. Functionally, has a broad substrate specificity. This Candida albicans (Yeast) protein is Beta-hexosaminidase (HEX1).